Reading from the N-terminus, the 188-residue chain is Elongation factor P-like protein (188 aa).

This sequence belongs to the elongation factor P family.

This Stenotrophomonas maltophilia (strain R551-3) protein is Elongation factor P-like protein.